Here is a 200-residue protein sequence, read N- to C-terminus: Diadenylate cyclase (200 aa).

The helical transmembrane segment at 5–25 (ILLFITLIFLLLLFVFLIAFA) threads the bilayer. The region spanning 28-185 (NKRVRNYVVR…KGVIKTLSSN (158 aa)) is the DAC domain.

Belongs to the adenylate cyclase family. DacB/CdaS subfamily. As to quaternary structure, probably oligomerizes.

The protein resides in the cell membrane. It catalyses the reaction 2 ATP = 3',3'-c-di-AMP + 2 diphosphate. Catalyzes the condensation of 2 ATP molecules into cyclic di-AMP (c-di-AMP), a second messenger used to regulate differing processes in different bacteria. This is Diadenylate cyclase from Mycoplasma genitalium (strain ATCC 33530 / DSM 19775 / NCTC 10195 / G37) (Mycoplasmoides genitalium).